A 415-amino-acid polypeptide reads, in one-letter code: Probable beta-1,4-xylosyltransferase IRX10L (415 aa).

Position 1 (M1) is a topological domain, cytoplasmic. Residues 2-22 (KLSSCVLIFLLCNTFSSISAF) form a helical; Signal-anchor for type II membrane protein membrane-spanning segment. The Lumenal portion of the chain corresponds to 23–415 (RLSRSQPTER…AGPVADLKPW (393 aa)). N142 and N403 each carry an N-linked (GlcNAc...) asparagine glycan.

It belongs to the glycosyltransferase 47 family. As to expression, present in the xylem and phloem, and, to a lower extent, in interfascicular cells. Expressed in the root tip, shoot apical meristem (SAM), xylem cells of roots and stems, and in the vasculature of roots, cotyledons and leaves.

It localises to the golgi apparatus membrane. Functionally, involved in the synthesis of the hemicellulose glucuronoxylan, a major component of secondary cell walls. Probably involved in the elongation of glucuronoxylan xylosyl backbone. The polypeptide is Probable beta-1,4-xylosyltransferase IRX10L (IRX10L) (Arabidopsis thaliana (Mouse-ear cress)).